The following is a 206-amino-acid chain: ATP phosphoribosyltransferase (206 aa).

The protein belongs to the ATP phosphoribosyltransferase family. Short subfamily. In terms of assembly, heteromultimer composed of HisG and HisZ subunits.

It is found in the cytoplasm. The enzyme catalyses 1-(5-phospho-beta-D-ribosyl)-ATP + diphosphate = 5-phospho-alpha-D-ribose 1-diphosphate + ATP. The protein operates within amino-acid biosynthesis; L-histidine biosynthesis; L-histidine from 5-phospho-alpha-D-ribose 1-diphosphate: step 1/9. Functionally, catalyzes the condensation of ATP and 5-phosphoribose 1-diphosphate to form N'-(5'-phosphoribosyl)-ATP (PR-ATP). Has a crucial role in the pathway because the rate of histidine biosynthesis seems to be controlled primarily by regulation of HisG enzymatic activity. The chain is ATP phosphoribosyltransferase from Thermus thermophilus (strain ATCC 27634 / DSM 579 / HB8).